The chain runs to 353 residues: Probable protein phosphatase 2C 48 (353 aa).

The region spanning 54-348 (FAAVCSRRGE…DDCSAICLFF (295 aa)) is the PPM-type phosphatase domain. Residues Asp90, Gly91, Asp293, and Asp339 each contribute to the Mn(2+) site.

The protein belongs to the PP2C family. Mg(2+) is required as a cofactor. Requires Mn(2+) as cofactor.

It carries out the reaction O-phospho-L-seryl-[protein] + H2O = L-seryl-[protein] + phosphate. It catalyses the reaction O-phospho-L-threonyl-[protein] + H2O = L-threonyl-[protein] + phosphate. The polypeptide is Probable protein phosphatase 2C 48 (Oryza sativa subsp. japonica (Rice)).